The chain runs to 619 residues: MFVPRSLKIKRSSNDDLKSGEAKKSKPEAGGLQVEGDRDTPVHTSVTEEAVTADKPGHASSTNSPSCQLAEVSSTGPDEGVKDSHPSEEPVKSFSKTQRWPEPGEPVCVVCGRYGEYICDKTDEDVCSLECKAKHLLQVKEGEGSLRPSSPQRVAAEPESPLDAFYVYKEHPFIVTLKEDQIETLKQQLGISVQGQDVARPIIDFEHCGFPETLNQNLKKSGYEVPTPIQMQMIPVGLLGRDILASADTGSGKTAAFLLPVIIRAFSEDKTPSALILTPTRELAIQIERQAKELMSGLPRMKTVLLVGGLPLPPQLYRLRQHVKVIIATPGRLLDIIKQSSVSLSGIKIVVVDEADTMLKMGFQQQVLDVLEHTPGDCQTILVSATIPDSIEQLTDQLLHNPVRIITGDKNLPCASVRQIILWVEDPAKKKKLFEILNDQKLFKPPVLVFVDCKLGADLLSEAVQKITGLNSTSIHSEKSQVERRDILKGLLEGDYEVVVSTGVLGRGLDLVNVKLVVNFDMPSSMDEYVHQVGRVGRLGQNGTAITFINNNSKRLFWDVAKRVKPTGSILPPQLLNSPYLHEQKRKEQQKDRQTQNSLVTGANLMDIIRKHEKSSSQK.

The disordered stretch occupies residues 1-101 (MFVPRSLKIK…KSFSKTQRWP (101 aa)). A compositionally biased stretch (basic and acidic residues) spans 12–27 (SSNDDLKSGEAKKSKP). Lys-26 is covalently cross-linked (Glycyl lysine isopeptide (Lys-Gly) (interchain with G-Cter in SUMO2)). A compositionally biased stretch (polar residues) spans 59–76 (ASSTNSPSCQLAEVSSTG). Residue Ser-64 is modified to Phosphoserine. A compositionally biased stretch (basic and acidic residues) spans 79-91 (EGVKDSHPSEEPV). An HIT-type zinc finger spans residues 104–133 (GEPVCVVCGRYGEYICDKTDEDVCSLECKA). Ser-160 is modified (phosphoserine). A Q motif motif is present at residues 203-231 (IDFEHCGFPETLNQNLKKSGYEVPTPIQM). The Helicase ATP-binding domain occupies 234–405 (IPVGLLGRDI…DQLLHNPVRI (172 aa)). 247–254 (ADTGSGKT) lines the ATP pocket. The DEAD box signature appears at 353-356 (DEAD). In terms of domain architecture, Helicase C-terminal spans 416-579 (SVRQIILWVE…ILPPQLLNSP (164 aa)). Residues 583 to 594 (EQKRKEQQKDRQ) show a composition bias toward basic and acidic residues. The interval 583–603 (EQKRKEQQKDRQTQNSLVTGA) is disordered.

It belongs to the DEAD box helicase family. DDX59 subfamily. Interacts (via HIT-type zinc finger) with the RUVBL1/RUVBL2 complex in the presence of ADP.

Its subcellular location is the cytoplasm. The protein resides in the nucleus. The catalysed reaction is ATP + H2O = ADP + phosphate + H(+). This is Probable ATP-dependent RNA helicase DDX59 (Ddx59) from Mus musculus (Mouse).